The chain runs to 262 residues: Small ribosomal subunit protein mS23 (262 aa).

The segment covering 242 to 254 has biased composition (acidic residues); the sequence is AAEEQETSLDDDA. The interval 242-262 is disordered; sequence AAEEQETSLDDDATEKVAVAA.

Belongs to the mitochondrion-specific ribosomal protein mS23 family. Component of the mitochondrial small ribosomal subunit.

It localises to the mitochondrion. This chain is Small ribosomal subunit protein mS23 (rsm25), found in Aspergillus niger (strain ATCC MYA-4892 / CBS 513.88 / FGSC A1513).